The sequence spans 136 residues: Histone H2A (136 aa).

The span at 1-11 shows a compositional bias: gly residues; the sequence is MTGGGKSGGKA. Residues 1–24 are disordered; sequence MTGGGKSGGKASGSKNAQSRSSKA. 2 positions are modified to N6-acetyllysine: K6 and K10. Residue Q107 is modified to N5-methylglutamine. A Phosphoserine modification is found at S133. The [ST]-Q motif motif lies at 133-134; it reads SQ.

It belongs to the histone H2A family. In terms of assembly, the nucleosome is a histone octamer containing two molecules each of H2A, H2B, H3 and H4 assembled in one H3-H4 heterotetramer and two H2A-H2B heterodimers. The octamer wraps approximately 147 bp of DNA. Post-translationally, phosphorylated to form H2AS128ph (gamma-H2A) in response to DNA double-strand breaks (DSBs) generated by exogenous genotoxic agents and by stalled replication forks. Phosphorylation is dependent on the DNA damage checkpoint kinases MEC1/ATR and TEL1/ATM, spreads on either side of a detected DSB site and may mark the surrounding chromatin for recruitment of proteins required for DNA damage signaling and repair. Gamma-H2A is removed from the DNA prior to the strand invasion-primer extension step of the repair process and subsequently dephosphorylated. Dephosphorylation is necessary for efficient recovery from the DNA damage checkpoint. Acetylated by ESA1 to form H2AK4ac and H2AK7ac.

It localises to the nucleus. It is found in the chromosome. Core component of nucleosome which plays a central role in DNA double strand break (DSB) repair. Nucleosomes wrap and compact DNA into chromatin, limiting DNA accessibility to the cellular machineries which require DNA as a template. Histones thereby play a central role in transcription regulation, DNA repair, DNA replication and chromosomal stability. DNA accessibility is regulated via a complex set of post-translational modifications of histones, also called histone code, and nucleosome remodeling. The chain is Histone H2A (HTA1) from Pyricularia oryzae (strain Y34) (Rice blast fungus).